The following is a 605-amino-acid chain: Probable potassium transport system protein Kup 1 (605 aa).

Transmembrane regions (helical) follow at residues 16–36 (ALGLVFGDIGTSPIYTLTVIF), 46–66 (VFGILSLVFWTMTILVTMEYA), 97–117 (VAFAGFLSFVGVSLLLGDGVI), 138–158 (GLSTGTLVAIAAAIAIGLFSV), 166–186 (VAGAFGPIMAVWFSTLAVTGV), 212–232 (GLAGYFVLSEVILCSTGGEAL), 248–268 (WYFVFMALYLNYLGQGVFAIT), 287–307 (LYIPFLILTIMATIIASQSII), 339–359 (IYLGAVNWSLMVAVILVMLLF), 368–388 (AYGMAVTGSMTITGIMMIIVF), 397–417 (ALVALVITLIDAAYLLSTFSK), and 418–438 (IPHGAYWSLILASIPFVTIII).

This sequence belongs to the HAK/KUP transporter (TC 2.A.72) family.

Its subcellular location is the cell inner membrane. The catalysed reaction is K(+)(in) + H(+)(in) = K(+)(out) + H(+)(out). Transport of potassium into the cell. Likely operates as a K(+):H(+) symporter. The polypeptide is Probable potassium transport system protein Kup 1 (Geobacter metallireducens (strain ATCC 53774 / DSM 7210 / GS-15)).